A 433-amino-acid chain; its full sequence is Enolase (433 aa).

Gln163 provides a ligand contact to (2R)-2-phosphoglycerate. Residue Glu205 is the Proton donor of the active site. 3 residues coordinate Mg(2+): Asp242, Glu285, and Asp312. Residues Lys337, Arg366, Ser367, and Lys388 each coordinate (2R)-2-phosphoglycerate. Catalysis depends on Lys337, which acts as the Proton acceptor.

It belongs to the enolase family. The cofactor is Mg(2+).

Its subcellular location is the cytoplasm. The protein localises to the secreted. It localises to the cell surface. The enzyme catalyses (2R)-2-phosphoglycerate = phosphoenolpyruvate + H2O. Its pathway is carbohydrate degradation; glycolysis; pyruvate from D-glyceraldehyde 3-phosphate: step 4/5. Catalyzes the reversible conversion of 2-phosphoglycerate (2-PG) into phosphoenolpyruvate (PEP). It is essential for the degradation of carbohydrates via glycolysis. This Lawsonia intracellularis (strain PHE/MN1-00) protein is Enolase.